The sequence spans 130 residues: Small ribosomal subunit protein uS9 (130 aa).

The segment at 105-130 (TRDSRMKERKKPGLRGARRAPQFSKR) is disordered. Residues 111-130 (KERKKPGLRGARRAPQFSKR) are compositionally biased toward basic residues.

It belongs to the universal ribosomal protein uS9 family.

The chain is Small ribosomal subunit protein uS9 from Lysinibacillus sphaericus (strain C3-41).